Here is a 420-residue protein sequence, read N- to C-terminus: Gamma-glutamyl phosphate reductase (420 aa).

It belongs to the gamma-glutamyl phosphate reductase family.

The protein resides in the cytoplasm. The catalysed reaction is L-glutamate 5-semialdehyde + phosphate + NADP(+) = L-glutamyl 5-phosphate + NADPH + H(+). The protein operates within amino-acid biosynthesis; L-proline biosynthesis; L-glutamate 5-semialdehyde from L-glutamate: step 2/2. In terms of biological role, catalyzes the NADPH-dependent reduction of L-glutamate 5-phosphate into L-glutamate 5-semialdehyde and phosphate. The product spontaneously undergoes cyclization to form 1-pyrroline-5-carboxylate. This is Gamma-glutamyl phosphate reductase from Oenococcus oeni (strain ATCC BAA-331 / PSU-1).